Here is an 82-residue protein sequence, read N- to C-terminus: MGSFSIWHWLIVLLVVVMIFGTKKLRNMGSDLGGAVKGFKDGMKDGSTTDAPAASSAPAAQVTGQPANSDKSTIDVEARQKS.

The helical transmembrane segment at 1–21 (MGSFSIWHWLIVLLVVVMIFG) threads the bilayer. Positions 39–82 (FKDGMKDGSTTDAPAASSAPAAQVTGQPANSDKSTIDVEARQKS) are disordered. Positions 51-60 (APAASSAPAA) are enriched in low complexity. The segment covering 62 to 71 (VTGQPANSDK) has biased composition (polar residues). The segment covering 72–82 (STIDVEARQKS) has biased composition (basic and acidic residues).

It belongs to the TatA/E family. The Tat system comprises two distinct complexes: a TatABC complex, containing multiple copies of TatA, TatB and TatC subunits, and a separate TatA complex, containing only TatA subunits. Substrates initially bind to the TatABC complex, which probably triggers association of the separate TatA complex to form the active translocon.

Its subcellular location is the cell inner membrane. Functionally, part of the twin-arginine translocation (Tat) system that transports large folded proteins containing a characteristic twin-arginine motif in their signal peptide across membranes. TatA could form the protein-conducting channel of the Tat system. The polypeptide is Sec-independent protein translocase protein TatA (Variovorax paradoxus (strain S110)).